Consider the following 490-residue polypeptide: Protein nucleotidyltransferase YdiU (490 aa).

Residues G89, G91, R92, K112, D124, G125, R175, and R182 each contribute to the ATP site. Catalysis depends on D251, which acts as the Proton acceptor. 2 residues coordinate Mg(2+): N252 and D261. D261 serves as a coordination point for ATP.

Belongs to the SELO family. It depends on Mg(2+) as a cofactor. Mn(2+) is required as a cofactor.

The enzyme catalyses L-seryl-[protein] + ATP = 3-O-(5'-adenylyl)-L-seryl-[protein] + diphosphate. It catalyses the reaction L-threonyl-[protein] + ATP = 3-O-(5'-adenylyl)-L-threonyl-[protein] + diphosphate. The catalysed reaction is L-tyrosyl-[protein] + ATP = O-(5'-adenylyl)-L-tyrosyl-[protein] + diphosphate. It carries out the reaction L-histidyl-[protein] + UTP = N(tele)-(5'-uridylyl)-L-histidyl-[protein] + diphosphate. The enzyme catalyses L-seryl-[protein] + UTP = O-(5'-uridylyl)-L-seryl-[protein] + diphosphate. It catalyses the reaction L-tyrosyl-[protein] + UTP = O-(5'-uridylyl)-L-tyrosyl-[protein] + diphosphate. Functionally, nucleotidyltransferase involved in the post-translational modification of proteins. It can catalyze the addition of adenosine monophosphate (AMP) or uridine monophosphate (UMP) to a protein, resulting in modifications known as AMPylation and UMPylation. The protein is Protein nucleotidyltransferase YdiU of Vibrio vulnificus (strain YJ016).